We begin with the raw amino-acid sequence, 57 residues long: MEWKLLLIVLPWLLVCKIFYKVEDFTEPDVAYQSIDYHPEDYIDSFTDFQKHDYFQY.

A signal peptide spans 1-16 (MEWKLLLIVLPWLLVC).

The protein localises to the secreted. In Drosophila melanogaster (Fruit fly), this protein is Protein new-glue 4 (ng4).